Consider the following 543-residue polypeptide: Light-independent protochlorophyllide reductase subunit B (543 aa).

[4Fe-4S] cluster is bound at residue D36. The Proton donor role is filled by D287. 422–423 (GL) serves as a coordination point for substrate.

The protein belongs to the ChlB/BchB/BchZ family. As to quaternary structure, protochlorophyllide reductase is composed of three subunits; BchL, BchN and BchB. Forms a heterotetramer of two BchB and two BchN subunits. The cofactor is [4Fe-4S] cluster.

It carries out the reaction chlorophyllide a + oxidized 2[4Fe-4S]-[ferredoxin] + 2 ADP + 2 phosphate = protochlorophyllide a + reduced 2[4Fe-4S]-[ferredoxin] + 2 ATP + 2 H2O. It participates in porphyrin-containing compound metabolism; bacteriochlorophyll biosynthesis (light-independent). In terms of biological role, component of the dark-operative protochlorophyllide reductase (DPOR) that uses Mg-ATP and reduced ferredoxin to reduce ring D of protochlorophyllide (Pchlide) to form chlorophyllide a (Chlide). This reaction is light-independent. The NB-protein (BchN-BchB) is the catalytic component of the complex. This Rubrivivax gelatinosus (strain NBRC 100245 / IL144) protein is Light-independent protochlorophyllide reductase subunit B.